The following is a 189-amino-acid chain: MTRIDVIDNHGQFTHLEQRALRDMGVDVSLRDNTTPPEEIDADGIVLSGGPDMDDIGNCPEYLDLDVPVLGICLGMQLIADELGGRVGGGEYGGYADVTVDILDDDDPLLGSLYPETRVWASHADEVKEVPPGFERTATSDVCGVEAMSNTDEAIYGVQWHPEVAHTEEGEEVFENFLSVCDQQSVARQ.

The Glutamine amidotransferase type-1 domain maps to 3–187 (RIDVIDNHGQ…LSVCDQQSVA (185 aa)). The active-site Nucleophile is Cys-73. Active-site residues include His-161 and Glu-163.

Heterodimer composed of a glutamine amidotransferase subunit (A) and a GMP-binding subunit (B).

The enzyme catalyses XMP + L-glutamine + ATP + H2O = GMP + L-glutamate + AMP + diphosphate + 2 H(+). Its pathway is purine metabolism; GMP biosynthesis; GMP from XMP (L-Gln route): step 1/1. Its function is as follows. Catalyzes the synthesis of GMP from XMP. In Haloarcula marismortui (strain ATCC 43049 / DSM 3752 / JCM 8966 / VKM B-1809) (Halobacterium marismortui), this protein is GMP synthase [glutamine-hydrolyzing] subunit A.